The primary structure comprises 617 residues: DNA mismatch repair protein MutL (617 aa).

The tract at residues 363–394 (YAPAYGARPPQPSAWSVDTSPHRPLDDGQNRF) is disordered. The segment covering 382 to 392 (SPHRPLDDGQN) has biased composition (basic and acidic residues).

This sequence belongs to the DNA mismatch repair MutL/HexB family.

Its function is as follows. This protein is involved in the repair of mismatches in DNA. It is required for dam-dependent methyl-directed DNA mismatch repair. May act as a 'molecular matchmaker', a protein that promotes the formation of a stable complex between two or more DNA-binding proteins in an ATP-dependent manner without itself being part of a final effector complex. The protein is DNA mismatch repair protein MutL of Allorhizobium ampelinum (strain ATCC BAA-846 / DSM 112012 / S4) (Agrobacterium vitis (strain S4)).